Here is a 322-residue protein sequence, read N- to C-terminus: tRNA U34 carboxymethyltransferase (322 aa).

Carboxy-S-adenosyl-L-methionine-binding positions include lysine 91, tryptophan 105, lysine 110, glycine 129, 179–180 (LE), methionine 195, tyrosine 199, and arginine 314.

This sequence belongs to the class I-like SAM-binding methyltransferase superfamily. CmoB family. Homotetramer.

The catalysed reaction is carboxy-S-adenosyl-L-methionine + 5-hydroxyuridine(34) in tRNA = 5-carboxymethoxyuridine(34) in tRNA + S-adenosyl-L-homocysteine + H(+). In terms of biological role, catalyzes carboxymethyl transfer from carboxy-S-adenosyl-L-methionine (Cx-SAM) to 5-hydroxyuridine (ho5U) to form 5-carboxymethoxyuridine (cmo5U) at position 34 in tRNAs. This Pseudomonas aeruginosa (strain LESB58) protein is tRNA U34 carboxymethyltransferase.